Consider the following 334-residue polypeptide: Ferredoxin--NADP reductase (334 aa).

D33, Q41, Y46, A86, F120, D286, and T327 together coordinate FAD.

Belongs to the ferredoxin--NADP reductase type 2 family. As to quaternary structure, homodimer. Requires FAD as cofactor.

The catalysed reaction is 2 reduced [2Fe-2S]-[ferredoxin] + NADP(+) + H(+) = 2 oxidized [2Fe-2S]-[ferredoxin] + NADPH. The sequence is that of Ferredoxin--NADP reductase from Rickettsia typhi (strain ATCC VR-144 / Wilmington).